Here is a 261-residue protein sequence, read N- to C-terminus: Pyridoxine-5'-phosphate oxidase (261 aa).

A pyridoxal 5'-phosphate-binding site is contributed by 42–45 (RGDP). 95–98 (RMVL) lines the FMN pocket. Lys100 provides a ligand contact to pyridoxal 5'-phosphate. FMN is bound by residues 110-111 (FT), 116-117 (RK), and Gln139. Pyridoxal 5'-phosphate is bound by residues Tyr157, Arg161, and Ser165. FMN is bound by residues 174–175 (QS) and Trp219. 225–227 (RLH) provides a ligand contact to pyridoxal 5'-phosphate. An FMN-binding site is contributed by Arg229. Phosphothreonine is present on Thr238. At Ser241 the chain carries Phosphoserine.

Belongs to the pyridoxamine 5'-phosphate oxidase family. As to quaternary structure, homodimer. Requires FMN as cofactor.

The enzyme catalyses pyridoxamine 5'-phosphate + O2 + H2O = pyridoxal 5'-phosphate + H2O2 + NH4(+). It catalyses the reaction pyridoxine 5'-phosphate + O2 = pyridoxal 5'-phosphate + H2O2. The protein operates within cofactor metabolism; pyridoxal 5'-phosphate salvage; pyridoxal 5'-phosphate from pyridoxamine 5'-phosphate: step 1/1. It participates in cofactor metabolism; pyridoxal 5'-phosphate salvage; pyridoxal 5'-phosphate from pyridoxine 5'-phosphate: step 1/1. Catalyzes the oxidation of either pyridoxine 5'-phosphate (PNP) or pyridoxamine 5'-phosphate (PMP) into pyridoxal 5'-phosphate (PLP). The sequence is that of Pyridoxine-5'-phosphate oxidase (PNPO) from Bos taurus (Bovine).